The chain runs to 237 residues: Sugar fermentation stimulation protein homolog (237 aa).

The protein belongs to the SfsA family.

The chain is Sugar fermentation stimulation protein homolog from Pseudomonas fluorescens (strain Pf0-1).